The following is a 398-amino-acid chain: Succinyl-diaminopimelate desuccinylase (398 aa).

Residue histidine 68 coordinates Zn(2+). The active site involves aspartate 70. Aspartate 101 lines the Zn(2+) pocket. The active-site Proton acceptor is glutamate 135. 3 residues coordinate Zn(2+): glutamate 136, glutamate 164, and histidine 349.

It belongs to the peptidase M20A family. DapE subfamily. As to quaternary structure, homodimer. Requires Zn(2+) as cofactor. It depends on Co(2+) as a cofactor.

It carries out the reaction N-succinyl-(2S,6S)-2,6-diaminopimelate + H2O = (2S,6S)-2,6-diaminopimelate + succinate. Its pathway is amino-acid biosynthesis; L-lysine biosynthesis via DAP pathway; LL-2,6-diaminopimelate from (S)-tetrahydrodipicolinate (succinylase route): step 3/3. Its function is as follows. Catalyzes the hydrolysis of N-succinyl-L,L-diaminopimelic acid (SDAP), forming succinate and LL-2,6-diaminopimelate (DAP), an intermediate involved in the bacterial biosynthesis of lysine and meso-diaminopimelic acid, an essential component of bacterial cell walls. This is Succinyl-diaminopimelate desuccinylase from Wolbachia pipientis wMel.